Reading from the N-terminus, the 671-residue chain is DNA ligase (671 aa).

NAD(+) is bound by residues 32 to 36 (DAEYD), 81 to 82 (SL), and glutamate 113. The N6-AMP-lysine intermediate role is filled by lysine 115. 4 residues coordinate NAD(+): arginine 136, glutamate 173, lysine 290, and lysine 314. Residues cysteine 408, cysteine 411, cysteine 426, and cysteine 432 each coordinate Zn(2+). In terms of domain architecture, BRCT spans 593 to 671 (EIDSPFAGKT…EAEMLRLLGS (79 aa)).

The protein belongs to the NAD-dependent DNA ligase family. LigA subfamily. It depends on Mg(2+) as a cofactor. The cofactor is Mn(2+).

It carries out the reaction NAD(+) + (deoxyribonucleotide)n-3'-hydroxyl + 5'-phospho-(deoxyribonucleotide)m = (deoxyribonucleotide)n+m + AMP + beta-nicotinamide D-nucleotide.. Its function is as follows. DNA ligase that catalyzes the formation of phosphodiester linkages between 5'-phosphoryl and 3'-hydroxyl groups in double-stranded DNA using NAD as a coenzyme and as the energy source for the reaction. It is essential for DNA replication and repair of damaged DNA. This Shigella boydii serotype 4 (strain Sb227) protein is DNA ligase.